The primary structure comprises 144 residues: Fluoride-specific ion channel FluC 1 (144 aa).

4 consecutive transmembrane segments (helical) span residues 11–31, 44–64, 74–94, and 107–127; these read LIYI…YYLG, LATL…TTYI, VITG…TFSV, and IAFL…GLGY. The Na(+) site is built by G84 and T87.

It belongs to the fluoride channel Fluc/FEX (TC 1.A.43) family.

The protein localises to the cell membrane. The enzyme catalyses fluoride(in) = fluoride(out). Its activity is regulated as follows. Na(+) is not transported, but it plays an essential structural role and its presence is essential for fluoride channel function. Fluoride-specific ion channel. Important for reducing fluoride concentration in the cell, thus reducing its toxicity. This Bacillus cereus (strain ATCC 14579 / DSM 31 / CCUG 7414 / JCM 2152 / NBRC 15305 / NCIMB 9373 / NCTC 2599 / NRRL B-3711) protein is Fluoride-specific ion channel FluC 1.